The chain runs to 333 residues: 4-hydroxy-3-methylbut-2-enyl diphosphate reductase (333 aa).

Cys34 is a binding site for [4Fe-4S] cluster. Residues His63 and His96 each coordinate (2E)-4-hydroxy-3-methylbut-2-enyl diphosphate. 2 residues coordinate dimethylallyl diphosphate: His63 and His96. 2 residues coordinate isopentenyl diphosphate: His63 and His96. Cys118 serves as a coordination point for [4Fe-4S] cluster. His146 serves as a coordination point for (2E)-4-hydroxy-3-methylbut-2-enyl diphosphate. Residue His146 participates in dimethylallyl diphosphate binding. An isopentenyl diphosphate-binding site is contributed by His146. Glu148 acts as the Proton donor in catalysis. Residue Thr186 participates in (2E)-4-hydroxy-3-methylbut-2-enyl diphosphate binding. Cys216 provides a ligand contact to [4Fe-4S] cluster. (2E)-4-hydroxy-3-methylbut-2-enyl diphosphate contacts are provided by Ser244, Ser245, Asn246, and Ser289. Ser244, Ser245, Asn246, and Ser289 together coordinate dimethylallyl diphosphate. Residues Ser244, Ser245, Asn246, and Ser289 each contribute to the isopentenyl diphosphate site.

The protein belongs to the IspH family. [4Fe-4S] cluster is required as a cofactor.

It catalyses the reaction isopentenyl diphosphate + 2 oxidized [2Fe-2S]-[ferredoxin] + H2O = (2E)-4-hydroxy-3-methylbut-2-enyl diphosphate + 2 reduced [2Fe-2S]-[ferredoxin] + 2 H(+). It carries out the reaction dimethylallyl diphosphate + 2 oxidized [2Fe-2S]-[ferredoxin] + H2O = (2E)-4-hydroxy-3-methylbut-2-enyl diphosphate + 2 reduced [2Fe-2S]-[ferredoxin] + 2 H(+). It functions in the pathway isoprenoid biosynthesis; dimethylallyl diphosphate biosynthesis; dimethylallyl diphosphate from (2E)-4-hydroxy-3-methylbutenyl diphosphate: step 1/1. Its pathway is isoprenoid biosynthesis; isopentenyl diphosphate biosynthesis via DXP pathway; isopentenyl diphosphate from 1-deoxy-D-xylulose 5-phosphate: step 6/6. Functionally, catalyzes the conversion of 1-hydroxy-2-methyl-2-(E)-butenyl 4-diphosphate (HMBPP) into a mixture of isopentenyl diphosphate (IPP) and dimethylallyl diphosphate (DMAPP). Acts in the terminal step of the DOXP/MEP pathway for isoprenoid precursor biosynthesis. The sequence is that of 4-hydroxy-3-methylbut-2-enyl diphosphate reductase from Mycolicibacterium gilvum (strain PYR-GCK) (Mycobacterium gilvum (strain PYR-GCK)).